A 226-amino-acid polypeptide reads, in one-letter code: Lipoprotein-releasing system ATP-binding protein LolD (226 aa).

Positions 5 to 225 (LELVEIERHF…TLKEKKIVEL (221 aa)) constitute an ABC transporter domain. 41–48 (APSGAGKS) lines the ATP pocket.

This sequence belongs to the ABC transporter superfamily. Lipoprotein translocase (TC 3.A.1.125) family. As to quaternary structure, the complex is composed of two ATP-binding proteins (LolD) and two transmembrane proteins (LolC and LolE).

It is found in the cell inner membrane. Functionally, part of the ABC transporter complex LolCDE involved in the translocation of mature outer membrane-directed lipoproteins, from the inner membrane to the periplasmic chaperone, LolA. Responsible for the formation of the LolA-lipoprotein complex in an ATP-dependent manner. In Bartonella quintana (strain Toulouse) (Rochalimaea quintana), this protein is Lipoprotein-releasing system ATP-binding protein LolD.